Consider the following 186-residue polypeptide: NAD(+) phosphorylase MbcT (186 aa).

Belongs to the MbcT/ParT/Res family. In terms of assembly, forms a heterotetramer with cognate antitoxin MbcA.

The catalysed reaction is phosphate + NAD(+) = ADP-alpha-D-ribose 1''-phosphate + nicotinamide + H(+). Toxic component of a type II toxin-antitoxin (TA) system. Degrades NAD(+) by phosphorolysis. Neutralized by its cognate antitoxin MbcA. The protein is NAD(+) phosphorylase MbcT (mbcT) of Mycobacterium bovis (strain ATCC BAA-935 / AF2122/97).